We begin with the raw amino-acid sequence, 635 residues long: MKITELLTKHTIKLNIESKEKENVIDEMVTVLDKAGKLNDRQAYKEAILNRESQSSTGIGEGIAIPHAKTASVINPAIAFGRSKDGVDYESLDGQPAHLVFMIAATEGANNTHLEALSRLSTLLMREEIRKQLLEAESEDAIIDIINQHDKDDDEEEEEEEAAPAPAGKGKILAVTACPTGIAHTFMAADALKEKAKELGVEIKVETNGSSGIKHKLTAQEIEDAPAIIVAADKQVEMERFKGKRVLQVPVTAGIRRPQELIEKAMNQDAPIYQGSGGGSAASNDDEEAKGKSGSGIGNTFYKHLMSGVSNMLPFVVGGGILVAISFFWGIHSADPNDPSYNTFAAALNFIGGDNALKLIVAVLAGFIAMSIADRPGFAPGMVGGFMATQANAGFLGGLIAGFLAGYVVILLKKVFTFIPQSLDGLKPVLIYPLFGIFITGVLMQFVVNTPVAAFMNFLTNWLESLGTGNLVLMGIILGGMMAIDMGGPLNKAAFTFGIAMIDAGNYAPHAAIMAGGMVPPLGIALATTIFRNKFTQRDREAGITCYFMGAAFVTEGAIPFAAADPLRVIPAAVVGAAVAGGLTEFFRVTLPAPHGGVFVAFITNHPMLYLLSIVIGAVVMAIILGIVKKPVTEK.

Residues glutamate 5–histidine 149 form the PTS EIIA type-2 domain. Histidine 67 acts as the Tele-phosphohistidine intermediate; for EIIA activity in catalysis. Phosphohistidine; by HPr is present on histidine 67. A disordered region spans residues histidine 149–glycine 168. A compositionally biased stretch (acidic residues) spans aspartate 152–alanine 162. A PTS EIIB type-2 domain is found at isoleucine 172–asparagine 267. Cysteine 178 (phosphocysteine intermediate; for EIIB activity) is an active-site residue. Position 178 is a phosphocysteine; by EIIA (cysteine 178). Residues tyrosine 273–serine 293 are disordered. The PTS EIIC type-2 domain occupies phenylalanine 301–lysine 635. The next 9 membrane-spanning stretches (helical) occupy residues methionine 312 to histidine 332, phenylalanine 350 to methionine 370, asparagine 392 to leucine 412, proline 428 to valine 448, asparagine 470 to leucine 490, alanine 511 to phenylalanine 531, isoleucine 544 to alanine 564, valine 569 to valine 589, and methionine 608 to valine 628.

The protein resides in the cell membrane. The enzyme catalyses D-fructose(out) + N(pros)-phospho-L-histidyl-[protein] = D-fructose 1-phosphate(in) + L-histidyl-[protein]. Functionally, the phosphoenolpyruvate-dependent sugar phosphotransferase system (sugar PTS), a major carbohydrate active transport system, catalyzes the phosphorylation of incoming sugar substrates concomitantly with their translocation across the cell membrane. This system is involved in fructose transport. This chain is PTS system fructose-specific EIIABC component (fruA), found in Bacillus subtilis (strain 168).